The chain runs to 245 residues: 7-cyano-7-deazaguanine synthase (245 aa).

Position 19–29 (19–29) interacts with ATP; that stretch reads FSGGQDSATCL. Residues Cys207, Cys222, Cys225, and Cys228 each coordinate Zn(2+).

Belongs to the QueC family. Zn(2+) is required as a cofactor.

It carries out the reaction 7-carboxy-7-deazaguanine + NH4(+) + ATP = 7-cyano-7-deazaguanine + ADP + phosphate + H2O + H(+). Its pathway is purine metabolism; 7-cyano-7-deazaguanine biosynthesis. In terms of biological role, catalyzes the ATP-dependent conversion of 7-carboxy-7-deazaguanine (CDG) to 7-cyano-7-deazaguanine (preQ(0)). In Gluconacetobacter diazotrophicus (strain ATCC 49037 / DSM 5601 / CCUG 37298 / CIP 103539 / LMG 7603 / PAl5), this protein is 7-cyano-7-deazaguanine synthase.